The primary structure comprises 381 residues: Cytochrome b (381 aa).

Transmembrane regions (helical) follow at residues 34–54, 78–99, 114–134, and 179–199; these read FGSL…FLAM, WLIR…YIHI, WNIG…GYVL, and FFAF…IHVL. Heme b contacts are provided by histidine 84 and histidine 98. Residues histidine 183 and histidine 197 each coordinate heme b. Histidine 202 contributes to the a ubiquinone binding site. The next 4 membrane-spanning stretches (helical) occupy residues 227–247, 289–309, 321–341, and 348–368; these read YKDA…ALFL, LGGV…PLLH, LTQV…WIGG, and FILI…IAMP.

The protein belongs to the cytochrome b family. As to quaternary structure, the cytochrome bc1 complex contains 3 respiratory subunits (MT-CYB, CYC1 and UQCRFS1), 2 core proteins (UQCRC1 and UQCRC2) and probably 6 low-molecular weight proteins. Heme b serves as cofactor.

Its subcellular location is the mitochondrion inner membrane. Its function is as follows. Component of the ubiquinol-cytochrome c reductase complex (complex III or cytochrome b-c1 complex) that is part of the mitochondrial respiratory chain. The b-c1 complex mediates electron transfer from ubiquinol to cytochrome c. Contributes to the generation of a proton gradient across the mitochondrial membrane that is then used for ATP synthesis. The polypeptide is Cytochrome b (mt-cyb) (Isurus paucus (Longfin mako shark)).